We begin with the raw amino-acid sequence, 215 residues long: uncharacterized protein (215 aa).

This is an uncharacterized protein from Acanthamoeba polyphaga mimivirus (APMV).